A 1086-amino-acid polypeptide reads, in one-letter code: Isoleucine--tRNA ligase (1086 aa).

Residues 53-63 (PFANGLPHYGH) carry the 'HIGH' region motif. The 'KMSKS' region signature appears at 624–628 (KLSKR). Lysine 627 serves as a coordination point for ATP.

It belongs to the class-I aminoacyl-tRNA synthetase family. IleS type 2 subfamily. As to quaternary structure, monomer. Requires Zn(2+) as cofactor.

The protein localises to the cytoplasm. The enzyme catalyses tRNA(Ile) + L-isoleucine + ATP = L-isoleucyl-tRNA(Ile) + AMP + diphosphate. Functionally, catalyzes the attachment of isoleucine to tRNA(Ile). As IleRS can inadvertently accommodate and process structurally similar amino acids such as valine, to avoid such errors it has two additional distinct tRNA(Ile)-dependent editing activities. One activity is designated as 'pretransfer' editing and involves the hydrolysis of activated Val-AMP. The other activity is designated 'posttransfer' editing and involves deacylation of mischarged Val-tRNA(Ile). The chain is Isoleucine--tRNA ligase from Rickettsia typhi (strain ATCC VR-144 / Wilmington).